The primary structure comprises 274 residues: MNYKPRTKVIAGNWKMHKCKDEALEFIQKVSLQVPDQTQVQTLIFPQLTLLDPLVQLQGANLQVGAQNMFYETEGAFTGEVSPQNLLSLGVKHVLLGHSERRTLFGETDQTVNLKLLSALKHKLVPTVCVGESLLTKENNQTQMFLDQQLTNIFAGVPEEALKNMIIAYEPVWAIGTGKSANPQDANKTIEQIREKVTALYSFQASCAIRIIYGGSLSVANIKSILEQPAIDGILAGKASLQTEDFLFFAQIASKQVLVSTKDIFQKNDCPFCY.

13 to 15 provides a ligand contact to substrate; the sequence is NWK. The active-site Electrophile is the histidine 98. The active-site Proton acceptor is the glutamate 170. Glycine 176 and serine 216 together coordinate substrate.

This sequence belongs to the triosephosphate isomerase family. Homodimer.

It localises to the cytoplasm. It carries out the reaction D-glyceraldehyde 3-phosphate = dihydroxyacetone phosphate. Its pathway is carbohydrate biosynthesis; gluconeogenesis. The protein operates within carbohydrate degradation; glycolysis; D-glyceraldehyde 3-phosphate from glycerone phosphate: step 1/1. In terms of biological role, involved in the gluconeogenesis. Catalyzes stereospecifically the conversion of dihydroxyacetone phosphate (DHAP) to D-glyceraldehyde-3-phosphate (G3P). This chain is Triosephosphate isomerase, found in Aster yellows witches'-broom phytoplasma (strain AYWB).